A 725-amino-acid chain; its full sequence is Catalase-peroxidase (725 aa).

Residues 98–226 (WHMAGSYRTS…LAAVQMGLIY (129 aa)) constitute a cross-link (tryptophyl-tyrosyl-methioninium (Trp-Tyr) (with M-252)). The active-site Proton acceptor is the His99. Residues 226–252 (YVNPEGVNGKSDPQATAYQMRETFARM) constitute a cross-link (tryptophyl-tyrosyl-methioninium (Tyr-Met) (with W-98)). Position 267 (His267) interacts with heme b.

The protein belongs to the peroxidase family. Peroxidase/catalase subfamily. As to quaternary structure, homodimer or homotetramer. The cofactor is heme b. In terms of processing, formation of the three residue Trp-Tyr-Met cross-link is important for the catalase, but not the peroxidase activity of the enzyme.

It catalyses the reaction H2O2 + AH2 = A + 2 H2O. The catalysed reaction is 2 H2O2 = O2 + 2 H2O. Functionally, bifunctional enzyme with both catalase and broad-spectrum peroxidase activity. This Paracoccus denitrificans (strain Pd 1222) protein is Catalase-peroxidase.